Here is a 40-residue protein sequence, read N- to C-terminus: Photosystem II reaction center protein J (40 aa).

Residue methionine 2 is modified to N-acetylmethionine. Residues 2–11 lie on the Cytoplasmic side of the membrane; the sequence is MSEGGRIPLW. A helical membrane pass occupies residues 12-26; that stretch reads IVATVAGMGVIVIVG. Residues 27-40 are Lumenal-facing; that stretch reads LFFYGAYAGLGSSL.

It belongs to the PsbJ family. In terms of assembly, PSII is composed of 1 copy each of membrane proteins PsbA, PsbB, PsbC, PsbD, PsbE, PsbF, PsbH, PsbI, PsbJ, PsbK, PsbL, PsbM, PsbT, PsbX, PsbY, PsbZ, Psb30/Ycf12, peripheral proteins PsbO, CyanoQ (PsbQ), PsbU, PsbV and a large number of cofactors. It forms dimeric complexes. Requires PSII binds multiple chlorophylls, carotenoids and specific lipids. as cofactor.

It is found in the cellular thylakoid membrane. In terms of biological role, one of the components of the core complex of photosystem II (PSII). PSII is a light-driven water:plastoquinone oxidoreductase that uses light energy to abstract electrons from H(2)O, generating O(2) and a proton gradient subsequently used for ATP formation. It consists of a core antenna complex that captures photons, and an electron transfer chain that converts photonic excitation into a charge separation. Functionally, may play a regulatory role in PSII biogenesis. In Thermosynechococcus vestitus (strain NIES-2133 / IAM M-273 / BP-1), this protein is Photosystem II reaction center protein J.